The sequence spans 146 residues: Large-conductance mechanosensitive channel (146 aa).

Helical transmembrane passes span 21 to 41 (VGIIIGAAFTGIVSSLVADLI), 44 to 64 (IIGLITGGIDFSNLFVNLGDG), and 83 to 103 (GSFITAVINFLIIAWVVFLLV).

Belongs to the MscL family. Homopentamer.

It localises to the cell inner membrane. Its function is as follows. Channel that opens in response to stretch forces in the membrane lipid bilayer. May participate in the regulation of osmotic pressure changes within the cell. In Cereibacter sphaeroides (strain ATCC 17029 / ATH 2.4.9) (Rhodobacter sphaeroides), this protein is Large-conductance mechanosensitive channel.